A 187-amino-acid chain; its full sequence is Holliday junction branch migration complex subunit RuvA (187 aa).

The interval 1-64 is domain I; that stretch reads MIEYVRGIIE…EDGFQIFGFK (64 aa). The segment at 65 to 136 is domain II; it reads TKEELDLFEK…ELKDKLPKEI (72 aa). The flexible linker stretch occupies residues 136 to 139; the sequence is IVFE. The tract at residues 140 to 187 is domain III; the sequence is GDNNFSNEALEALLALGYTKSEAIYALADITCDSVEDAVKQALKKLMK.

This sequence belongs to the RuvA family. As to quaternary structure, homotetramer. Forms an RuvA(8)-RuvB(12)-Holliday junction (HJ) complex. HJ DNA is sandwiched between 2 RuvA tetramers; dsDNA enters through RuvA and exits via RuvB. An RuvB hexamer assembles on each DNA strand where it exits the tetramer. Each RuvB hexamer is contacted by two RuvA subunits (via domain III) on 2 adjacent RuvB subunits; this complex drives branch migration. In the full resolvosome a probable DNA-RuvA(4)-RuvB(12)-RuvC(2) complex forms which resolves the HJ.

Its subcellular location is the cytoplasm. In terms of biological role, the RuvA-RuvB-RuvC complex processes Holliday junction (HJ) DNA during genetic recombination and DNA repair, while the RuvA-RuvB complex plays an important role in the rescue of blocked DNA replication forks via replication fork reversal (RFR). RuvA specifically binds to HJ cruciform DNA, conferring on it an open structure. The RuvB hexamer acts as an ATP-dependent pump, pulling dsDNA into and through the RuvAB complex. HJ branch migration allows RuvC to scan DNA until it finds its consensus sequence, where it cleaves and resolves the cruciform DNA. This chain is Holliday junction branch migration complex subunit RuvA, found in Thermoanaerobacter pseudethanolicus (strain ATCC 33223 / 39E) (Clostridium thermohydrosulfuricum).